Consider the following 322-residue polypeptide: MMESGEALLKKLDGRLSGLRGRLTPDTGMDKITWFRAGGPAQVLFQPSDEEDLSAFLKAVPEEIPLLVVGIGSNLLVRDGGVPGFVVRLSAKGFGEVEQVCDTQLRAGAAAPDKRVAAAALEAGLAGFHFYHGIPGGIGGALRMNAGANGVETRERVVEVRALDRKGEVHVLSNADMGYAYRHSSASPDLIFTSVLFEGVPGERDDIRRAMDEVQHHRETVQPVREKTGGSTFKNPEGTSAWKEIDKAGCRGLRVGGAQMSEMHCNFMINTGNATGHDLETLGETVRARVFENSGIRLHWEIKRLGLFREGEQIEEFLGKIV.

The 167-residue stretch at 36-202 folds into the FAD-binding PCMH-type domain; it reads RAGGPAQVLF…TSVLFEGVPG (167 aa). Residue Arg-182 is part of the active site. Ser-231 (proton donor) is an active-site residue. The active site involves Glu-301.

Belongs to the MurB family. It depends on FAD as a cofactor.

The protein resides in the cytoplasm. It carries out the reaction UDP-N-acetyl-alpha-D-muramate + NADP(+) = UDP-N-acetyl-3-O-(1-carboxyvinyl)-alpha-D-glucosamine + NADPH + H(+). It participates in cell wall biogenesis; peptidoglycan biosynthesis. In terms of biological role, cell wall formation. The chain is UDP-N-acetylenolpyruvoylglucosamine reductase from Brucella melitensis biotype 2 (strain ATCC 23457).